Here is a 337-residue protein sequence, read N- to C-terminus: Adenosine deaminase (337 aa).

His-15 and His-17 together coordinate Zn(2+). His-17, Asp-19, and Gly-172 together coordinate substrate. His-199 is a binding site for Zn(2+). Catalysis depends on Glu-202, which acts as the Proton donor. Zn(2+) is bound at residue Asp-279.

The protein belongs to the metallo-dependent hydrolases superfamily. Adenosine and AMP deaminases family. Adenosine deaminase subfamily. The cofactor is Zn(2+).

The enzyme catalyses adenosine + H2O + H(+) = inosine + NH4(+). It catalyses the reaction 2'-deoxyadenosine + H2O + H(+) = 2'-deoxyinosine + NH4(+). Its function is as follows. Catalyzes the hydrolytic deamination of adenosine and 2-deoxyadenosine. The sequence is that of Adenosine deaminase from Enterococcus faecalis (strain ATCC 700802 / V583).